An 83-amino-acid chain; its full sequence is Small ribosomal subunit protein uS17 (83 aa).

The protein belongs to the universal ribosomal protein uS17 family. As to quaternary structure, part of the 30S ribosomal subunit.

Its function is as follows. One of the primary rRNA binding proteins, it binds specifically to the 5'-end of 16S ribosomal RNA. The protein is Small ribosomal subunit protein uS17 of Magnetococcus marinus (strain ATCC BAA-1437 / JCM 17883 / MC-1).